Here is a 210-residue protein sequence, read N- to C-terminus: Na(+)-translocating NADH-quinone reductase subunit D (210 aa).

The next 6 helical transmembrane spans lie at 14–34 (PIVS…ALAV), 42–62 (LVMT…ISML), 72–92 (IIVQ…VLQA), 103–123 (VFVG…AYAM), 131–151 (FMDG…VGFV), and 178–198 (NGLL…IWII).

This sequence belongs to the NqrDE/RnfAE family. As to quaternary structure, composed of six subunits; NqrA, NqrB, NqrC, NqrD, NqrE and NqrF.

The protein resides in the cell inner membrane. It catalyses the reaction a ubiquinone + n Na(+)(in) + NADH + H(+) = a ubiquinol + n Na(+)(out) + NAD(+). Its function is as follows. NQR complex catalyzes the reduction of ubiquinone-1 to ubiquinol by two successive reactions, coupled with the transport of Na(+) ions from the cytoplasm to the periplasm. NqrA to NqrE are probably involved in the second step, the conversion of ubisemiquinone to ubiquinol. This is Na(+)-translocating NADH-quinone reductase subunit D from Shewanella woodyi (strain ATCC 51908 / MS32).